The primary structure comprises 117 residues: UPF0342 protein LGAS_1451 (117 aa).

This sequence belongs to the UPF0342 family.

In Lactobacillus gasseri (strain ATCC 33323 / DSM 20243 / BCRC 14619 / CIP 102991 / JCM 1131 / KCTC 3163 / NCIMB 11718 / NCTC 13722 / AM63), this protein is UPF0342 protein LGAS_1451.